Reading from the N-terminus, the 236-residue chain is LexA repressor (236 aa).

Residues 26–46 (FDEMKEALDLASKSGIHRLIT) constitute a DNA-binding region (H-T-H motif). The disordered stretch occupies residues 84–107 (SPSVIEGGQGRSSPAPRPAANNDD). Catalysis depends on for autocatalytic cleavage activity residues Ser-157 and Lys-195.

The protein belongs to the peptidase S24 family. In terms of assembly, homodimer.

The enzyme catalyses Hydrolysis of Ala-|-Gly bond in repressor LexA.. In terms of biological role, represses a number of genes involved in the response to DNA damage (SOS response), including recA and lexA. In the presence of single-stranded DNA, RecA interacts with LexA causing an autocatalytic cleavage which disrupts the DNA-binding part of LexA, leading to derepression of the SOS regulon and eventually DNA repair. This chain is LexA repressor, found in Chelativorans sp. (strain BNC1).